The following is a 435-amino-acid chain: Eukaryotic translation initiation factor 3 subunit E (435 aa).

One can recognise a PCI domain in the interval 219 to 392 (FFNHAKGRDL…GHVVMGTQPL (174 aa)).

Belongs to the eIF-3 subunit E family. In terms of assembly, component of the eukaryotic translation initiation factor 3 (eIF-3) complex.

The protein localises to the cytoplasm. Component of the eukaryotic translation initiation factor 3 (eIF-3) complex, which is involved in protein synthesis of a specialized repertoire of mRNAs and, together with other initiation factors, stimulates binding of mRNA and methionyl-tRNAi to the 40S ribosome. The eIF-3 complex specifically targets and initiates translation of a subset of mRNAs involved in cell proliferation. This chain is Eukaryotic translation initiation factor 3 subunit E (eIF3-S6), found in Culex quinquefasciatus (Southern house mosquito).